A 159-amino-acid polypeptide reads, in one-letter code: NADH-quinone oxidoreductase subunit I (159 aa).

4Fe-4S ferredoxin-type domains follow at residues 51 to 80 (RRYENGEERCIACKLCEAICPAQAIVIEAD) and 90 to 119 (TRYDIDMTKCIYCGLCQEACPVDAIVEGPN). The [4Fe-4S] cluster site is built by cysteine 60, cysteine 63, cysteine 66, cysteine 70, cysteine 99, cysteine 102, cysteine 105, and cysteine 109.

Belongs to the complex I 23 kDa subunit family. As to quaternary structure, NDH-1 is composed of 14 different subunits. Subunits NuoA, H, J, K, L, M, N constitute the membrane sector of the complex. [4Fe-4S] cluster serves as cofactor.

The protein localises to the cell inner membrane. It carries out the reaction a quinone + NADH + 5 H(+)(in) = a quinol + NAD(+) + 4 H(+)(out). Its function is as follows. NDH-1 shuttles electrons from NADH, via FMN and iron-sulfur (Fe-S) centers, to quinones in the respiratory chain. The immediate electron acceptor for the enzyme in this species is believed to be ubiquinone. Couples the redox reaction to proton translocation (for every two electrons transferred, four hydrogen ions are translocated across the cytoplasmic membrane), and thus conserves the redox energy in a proton gradient. This chain is NADH-quinone oxidoreductase subunit I, found in Rickettsia felis (strain ATCC VR-1525 / URRWXCal2) (Rickettsia azadi).